A 129-amino-acid polypeptide reads, in one-letter code: Glycine cleavage system H protein (129 aa).

The 83-residue stretch at 24 to 106 (LVRVGISAFA…HGEGWLLVVR (83 aa)) folds into the Lipoyl-binding domain. Lys-65 is modified (N6-lipoyllysine).

The protein belongs to the GcvH family. The glycine cleavage system is composed of four proteins: P, T, L and H. (R)-lipoate is required as a cofactor.

In terms of biological role, the glycine cleavage system catalyzes the degradation of glycine. The H protein shuttles the methylamine group of glycine from the P protein to the T protein. The chain is Glycine cleavage system H protein from Prochlorococcus marinus (strain MIT 9303).